Here is a 382-residue protein sequence, read N- to C-terminus: 6-oxocyclohex-1-ene-1-carbonyl-CoA hydrolase (382 aa).

The protein belongs to the enoyl-CoA hydratase/isomerase family. As to quaternary structure, homohexamer.

The catalysed reaction is 6-oxocyclohex-1-ene-1-carbonyl-CoA + 2 H2O = 3-hydroxy-6-carboxyhexanoyl-CoA + H(+). Its pathway is aromatic compound metabolism; benzoyl-CoA degradation. Its function is as follows. Involved in the central benzoyl-CoA catabolism. Catalyzes the addition of one molecule of water to the double bond and the hydrolytic cleavage of C-C bond in the alicyclic ring, 6-oxocyclohex-1-ene-1-carbonyl-CoA (6-OCH-CoA) to yield 3-hydroxypimelyl-CoA. The protein is 6-oxocyclohex-1-ene-1-carbonyl-CoA hydrolase of Syntrophus aciditrophicus (strain SB).